A 138-amino-acid polypeptide reads, in one-letter code: Acidic phospholipase A2 BE-I-PLA2 (138 aa).

A signal peptide spans 1-16; the sequence is MRTLWIMAVLLVGVEG. 7 disulfides stabilise this stretch: Cys42/Cys131, Cys44/Cys60, Cys59/Cys111, Cys65/Cys138, Cys66/Cys104, Cys73/Cys97, and Cys91/Cys102. 3 residues coordinate Ca(2+): Tyr43, Gly45, and Gly47. The active site involves His63. Asp64 contributes to the Ca(2+) binding site. Residue Asp105 is part of the active site.

Belongs to the phospholipase A2 family. Group II subfamily. D49 sub-subfamily. The cofactor is Ca(2+). Expressed by the venom gland.

Its subcellular location is the secreted. The catalysed reaction is a 1,2-diacyl-sn-glycero-3-phosphocholine + H2O = a 1-acyl-sn-glycero-3-phosphocholine + a fatty acid + H(+). Its function is as follows. Snake venom phospholipase A2 that shows a potent inhibition of human platelet aggregation. This inhibition is concentration-dependent when aggregation is induced by collagen, and concentration-independent when aggregation is induced by arachidonic acid. In human umbilical-cord vein endothelial cells, this toxin stimulates endothelial cells to release prostaglandin I(2), suggesting an increase of its potential anti-platelet activity in vivo. PLA2 catalyzes the calcium-dependent hydrolysis of the 2-acyl groups in 3-sn-phosphoglycerides. The sequence is that of Acidic phospholipase A2 BE-I-PLA2 from Bothrops erythromelas (Caatinga lance head).